A 68-amino-acid polypeptide reads, in one-letter code: Large ribosomal subunit protein bL31 (68 aa).

Zn(2+) is bound by residues Cys-16, Cys-18, Cys-37, and Cys-40.

The protein belongs to the bacterial ribosomal protein bL31 family. Type A subfamily. As to quaternary structure, part of the 50S ribosomal subunit. Zn(2+) is required as a cofactor.

Its function is as follows. Binds the 23S rRNA. The polypeptide is Large ribosomal subunit protein bL31 (Aquifex aeolicus (strain VF5)).